Consider the following 292-residue polypeptide: WRKY transcription factor 55 (292 aa).

Residues valine 133–glutamate 155 are disordered. A DNA-binding region (WRKY) is located at residues asparagine 167–serine 235.

It belongs to the WRKY group III family.

The protein localises to the nucleus. Functionally, transcription factor. Interacts specifically with the W box (5'-(T)TGAC[CT]-3'), a frequently occurring elicitor-responsive cis-acting element. This chain is WRKY transcription factor 55 (WRKY55), found in Arabidopsis thaliana (Mouse-ear cress).